Consider the following 285-residue polypeptide: Lectin (285 aa).

The N-terminal stretch at Met1–Ser32 is a signal peptide. A glycan (N-linked (GlcNAc...) asparagine) is linked at Asn107.

Belongs to the leguminous lectin family. In terms of assembly, homotetramer.

Its function is as follows. Binds GalNAc and galactose. The protein is Lectin (LE1) of Glycine max (Soybean).